A 1427-amino-acid polypeptide reads, in one-letter code: Tonsoku-like protein (1427 aa).

Positions 1 to 21 (MTSTKEIKQLQKAKSKAQSSN) are disordered. The segment covering 10–21 (LQKAKSKAQSSN) has biased composition (low complexity). 8 TPR repeats span residues 27-60 (ASLC…SEIL), 67-100 (AVAN…ARSV), 107-147 (QRAL…VDER), 162-195 (ARLL…AEKN), 202-235 (YRAN…ARKM), 242-275 (SECF…GSQQ), 311-344 (LDLS…AEAL), and 352-385 (AVIH…RKGN). Residues 465–502 (LSLDQSEDEDEEDEVDNSEPLEDSDIQYSESDDEDLEG) are disordered. The segment covering 469-501 (QSEDEDEEDEVDNSEPLEDSDIQYSESDDEDLE) has biased composition (acidic residues). 3 ANK repeats span residues 522–551 (KGET…PVNV), 555–584 (CGWT…NVND), and 591–620 (GGIT…SVTV). Disordered regions lie at residues 692–801 (PLLR…SESG), 865–922 (KKKR…KMNQ), and 941–961 (IMTQ…QAMP). The span at 742–761 (DDSSSSDNPDSDCSLSPLRP) shows a compositional bias: low complexity. Positions 773-783 (SPQEVPSSQEL) are enriched in polar residues. The span at 871–880 (SEHNATRETT) shows a compositional bias: basic and acidic residues. Residues 881–890 (SRSQNNSSTI) show a composition bias toward polar residues. Over residues 899–910 (SCSSRGSLSLKK) the composition is skewed to low complexity. LRR repeat units follow at residues 1113–1137 (QASL…MMAA), 1141–1168 (MPRL…AFET), 1174–1197 (FPCL…ALAS), 1234–1258 (TGNM…VLKT), 1293–1316 (DCPL…LLAR), 1321–1346 (CPSL…LLNG), and 1377–1400 (SDHI…ALQQ).

It belongs to the Tonsoku family. Component of the MMS22L-TONSL complex. Binds histones, with a strong preference for histone H3.1 (histones H3.1 and H3-4/H3.1t).

It is found in the nucleus. It localises to the chromosome. The protein localises to the cytoplasm. Its function is as follows. Component of the MMS22L-TONSL complex, a complex that promotes homologous recombination-mediated repair of double-strand breaks (DSBs) at stalled or collapsed replication forks. The MMS22L-TONSL complex is required to maintain genome integrity during DNA replication. It mediates the assembly of RAD51 filaments on single-stranded DNA (ssDNA): the MMS22L-TONSL complex is recruited to DSBs following histone replacement by histone chaperones and eviction of the replication protein A complex (RPA/RP-A) from DSBs. Following recruitment to DSBs, the TONSL-MMS22L complex promotes recruitment of RAD51 filaments and subsequent homologous recombination. Within the complex, TONSL acts as a histone reader, which recognizes and binds newly synthesized histones following their replacement by histone chaperones. The protein is Tonsoku-like protein (tonsl) of Danio rerio (Zebrafish).